Here is a 175-residue protein sequence, read N- to C-terminus: Bifunctional protein PyrR (175 aa).

Substrate-binding positions include 40-41 (TR), 102-110 (DDVLYTGRT), arginine 135, and valine 159. The PRPP-binding signature appears at 98–110 (VIIIDDVLYTGRT).

The protein belongs to the purine/pyrimidine phosphoribosyltransferase family. PyrR subfamily. In terms of assembly, homodimer and homohexamer; in equilibrium.

It carries out the reaction UMP + diphosphate = 5-phospho-alpha-D-ribose 1-diphosphate + uracil. Its function is as follows. Regulates transcriptional attenuation of the pyrimidine nucleotide (pyr) operon by binding in a uridine-dependent manner to specific sites on pyr mRNA. This disrupts an antiterminator hairpin in the RNA and favors formation of a downstream transcription terminator, leading to a reduced expression of downstream genes. Also displays a weak uracil phosphoribosyltransferase activity which is not physiologically significant. In Staphylococcus aureus (strain MSSA476), this protein is Bifunctional protein PyrR.